A 1464-amino-acid polypeptide reads, in one-letter code: Alpha-glucan water dikinase, chloroplastic (1464 aa).

The transit peptide at 1-77 directs the protein to the chloroplast; it reads MSNSLGNNLL…KRAFSSSPHA (77 aa). H1069 acts as the Tele-phosphohistidine intermediate in catalysis.

The protein belongs to the PEP-utilizing enzyme family. In terms of assembly, homodimer. Mg(2+) is required as a cofactor. In terms of tissue distribution, expressed in leaves.

The protein localises to the plastid. It localises to the chloroplast. It catalyses the reaction [(1-&gt;4)-alpha-D-glucosyl](n) + n ATP + n H2O = [(1-&gt;4)-6-phospho-alpha-D-glucosyl](n) + n AMP + n phosphate + 2n H(+). It carries out the reaction ATP + protein L-histidine = ADP + protein N-phospho-L-histidine.. In terms of biological role, mediates the incorporation of phosphate into starch-like alpha-glucan, mostly at the C-6 position of glucose units. Acts as an overall regulator of starch mobilization. Required for starch degradation, suggesting that the phosphate content of starch regulates its degradability. More active on alpha-1,6 branched amylopectin. The polypeptide is Alpha-glucan water dikinase, chloroplastic (R1) (Solanum tuberosum (Potato)).